A 488-amino-acid polypeptide reads, in one-letter code: Malonate-semialdehyde dehydrogenase (488 aa).

Residues A150, F152, K176, E179, R180, S229, and T251 each coordinate NAD(+). C284 acts as the Nucleophile in catalysis. E382 contributes to the NAD(+) binding site.

This sequence belongs to the aldehyde dehydrogenase family. IolA subfamily. In terms of assembly, homotetramer.

It catalyses the reaction 3-oxopropanoate + NAD(+) + CoA + H2O = hydrogencarbonate + acetyl-CoA + NADH + H(+). The enzyme catalyses 2-methyl-3-oxopropanoate + NAD(+) + CoA + H2O = propanoyl-CoA + hydrogencarbonate + NADH + H(+). The protein operates within polyol metabolism; myo-inositol degradation into acetyl-CoA; acetyl-CoA from myo-inositol: step 7/7. Catalyzes the oxidation of malonate semialdehyde (MSA) and methylmalonate semialdehyde (MMSA) into acetyl-CoA and propanoyl-CoA, respectively. Is involved in a myo-inositol catabolic pathway. Bicarbonate, and not CO2, is the end-product of the enzymatic reaction. The protein is Malonate-semialdehyde dehydrogenase of Listeria monocytogenes serovar 1/2a (strain ATCC BAA-679 / EGD-e).